A 101-amino-acid chain; its full sequence is 2-amino-4-ketopentanoate thiolase alpha subunit (101 aa).

The protein belongs to the OrtA family. Heterodimer with OrtB.

It carries out the reaction D-alanine + acetyl-CoA = (2R)-2-amino-4-oxopentanoate + CoA. Its function is as follows. Involved in the ornithine fermentation pathway. Catalyzes the thiolytic cleavage of 2-amino-4-ketopentanoate (AKP) with coenzyme A (CoA) to form acetyl-CoA and alanine. It is strictly specific for AKP. The sequence is that of 2-amino-4-ketopentanoate thiolase alpha subunit from Unknown prokaryotic organism.